The sequence spans 538 residues: Phosphoenolpyruvate carboxykinase (ATP) (538 aa).

3 residues coordinate substrate: arginine 62, tyrosine 203, and lysine 209. ATP is bound by residues lysine 209, histidine 228, and 244–252 (GLSGTGKTT). Mn(2+)-binding residues include lysine 209 and histidine 228. Aspartate 265 contacts Mn(2+). Residues glutamate 293, arginine 329, 445–446 (RI), and threonine 451 contribute to the ATP site. Arginine 329 serves as a coordination point for substrate.

Belongs to the phosphoenolpyruvate carboxykinase (ATP) family. As to quaternary structure, monomer. Mn(2+) is required as a cofactor.

The protein resides in the cytoplasm. It catalyses the reaction oxaloacetate + ATP = phosphoenolpyruvate + ADP + CO2. The protein operates within carbohydrate biosynthesis; gluconeogenesis. Involved in the gluconeogenesis. Catalyzes the conversion of oxaloacetate (OAA) to phosphoenolpyruvate (PEP) through direct phosphoryl transfer between the nucleoside triphosphate and OAA. This Haemophilus ducreyi (strain 35000HP / ATCC 700724) protein is Phosphoenolpyruvate carboxykinase (ATP).